We begin with the raw amino-acid sequence, 124 residues long: Large ribosomal subunit protein uL18 (124 aa).

Belongs to the universal ribosomal protein uL18 family. As to quaternary structure, part of the 50S ribosomal subunit; part of the 5S rRNA/L5/L18/L25 subcomplex. Contacts the 5S and 23S rRNAs.

This is one of the proteins that bind and probably mediate the attachment of the 5S RNA into the large ribosomal subunit, where it forms part of the central protuberance. This chain is Large ribosomal subunit protein uL18, found in Aquifex aeolicus (strain VF5).